Reading from the N-terminus, the 279-residue chain is NADPH-dependent 7-cyano-7-deazaguanine reductase (279 aa).

Residue 86–88 participates in substrate binding; it reads IES. 88-89 is an NADPH binding site; the sequence is SK. Cysteine 187 (thioimide intermediate) is an active-site residue. The Proton donor role is filled by aspartate 194. 226–227 provides a ligand contact to substrate; it reads HE. 255-256 contacts NADPH; it reads RG.

This sequence belongs to the GTP cyclohydrolase I family. QueF type 2 subfamily. Homodimer.

It is found in the cytoplasm. It carries out the reaction 7-aminomethyl-7-carbaguanine + 2 NADP(+) = 7-cyano-7-deazaguanine + 2 NADPH + 3 H(+). The protein operates within tRNA modification; tRNA-queuosine biosynthesis. Functionally, catalyzes the NADPH-dependent reduction of 7-cyano-7-deazaguanine (preQ0) to 7-aminomethyl-7-deazaguanine (preQ1). This Actinobacillus pleuropneumoniae serotype 3 (strain JL03) protein is NADPH-dependent 7-cyano-7-deazaguanine reductase.